Here is a 351-residue protein sequence, read N- to C-terminus: Dihydroorotate dehydrogenase (quinone) (351 aa).

Residues 61-65 (AGLDK) and Thr-85 contribute to the FMN site. Residue Lys-65 participates in substrate binding. 110 to 114 (NRMGF) is a substrate binding site. Residues Asn-139 and Asn-172 each contribute to the FMN site. Residue Asn-172 participates in substrate binding. Ser-175 (nucleophile) is an active-site residue. Asn-177 is a substrate binding site. FMN contacts are provided by Lys-217 and Thr-245. 246–247 (NT) lines the substrate pocket. Residues Gly-268, Gly-297, and 318–319 (YS) contribute to the FMN site.

This sequence belongs to the dihydroorotate dehydrogenase family. Type 2 subfamily. As to quaternary structure, monomer. FMN is required as a cofactor.

Its subcellular location is the cell membrane. It catalyses the reaction (S)-dihydroorotate + a quinone = orotate + a quinol. The protein operates within pyrimidine metabolism; UMP biosynthesis via de novo pathway; orotate from (S)-dihydroorotate (quinone route): step 1/1. In terms of biological role, catalyzes the conversion of dihydroorotate to orotate with quinone as electron acceptor. This Xanthomonas axonopodis pv. citri (strain 306) protein is Dihydroorotate dehydrogenase (quinone).